We begin with the raw amino-acid sequence, 179 residues long: Large ribosomal subunit protein uL5 (179 aa).

Belongs to the universal ribosomal protein uL5 family. Part of the 50S ribosomal subunit; part of the 5S rRNA/L5/L18/L25 subcomplex. Contacts the 5S rRNA and the P site tRNA. Forms a bridge to the 30S subunit in the 70S ribosome.

This is one of the proteins that bind and probably mediate the attachment of the 5S RNA into the large ribosomal subunit, where it forms part of the central protuberance. In the 70S ribosome it contacts protein S13 of the 30S subunit (bridge B1b), connecting the 2 subunits; this bridge is implicated in subunit movement. Contacts the P site tRNA; the 5S rRNA and some of its associated proteins might help stabilize positioning of ribosome-bound tRNAs. This Shewanella amazonensis (strain ATCC BAA-1098 / SB2B) protein is Large ribosomal subunit protein uL5.